A 1127-amino-acid polypeptide reads, in one-letter code: MTDKLKFKTSLLNKVPPPPPKSNQPSPSTSTPASPNVNSTNNSPSVSPATTSPIPSPGMSPLLTPENNNNNTNIPHQTSLLNNSISNKSSVSFLNNSGGNTINKSSPLSQSSSNIKNGGPIRTSTTLAQFSGSSLPNTENSSPPPSSSLISSSSSPTAESLLYSEDSIASGGTVTVDPNTKNGNIYNGNGLRNNSADILPHNNHTYCVGDDGFYLFGGTLPDGSYTNDFYTFQFAIKAWTILTFGSAPSIRTRHTGVLYNNSMYIFGGYSPSGPKNDIYVFSFDTQTWSEVQTEGTKPSPRYGHTAVVESGHMIVFGGISCDQTTKQQTVNNDIFSLNLDTKQWSQVLSTCPPSPRTHHTATMHKGNMYVFGGQDQQSNQVEDIVHCYTWASNSWKSIQFEGSSMTPRSDHSAVLFQDSIFISGGSSKSQTSQNLEIYEYDLYQKKCFKISSSTIVQNRISHSSVVKGNSILFWGGCTDNSFDYFSFGKDEFEEDYQDDYESNRVQNIPKELWEASLMKKHPEILELREKTLAFTGSKSFAKTLATPSFSENRLALSHQFVLQLIMEYLERNTYHKVIAAIQKESGVLHQPTESGESRLVSLLRLVKPRLRNKNVFDTDLSLFSKEEGNDPEVAVVDHLYHDYRHFDEEEDINVWEEGEDNNRNIRKVETDNNKVQIKAATFNKLIHYLAPKEKAFDPNFLKVFLYTHSSFTTSEKLLKKLIQRYQVPNSNANEPKYKSEVVEPVRQRVVDVLKYWVDKCPWDFNAGPTSSVLVATLNNFIDGSLTRDGNSNIKKLRELKKKLQHEDVRPYSEPPPEPKVPKNIFSPQLTLAHIDELEIARQMTLVESKLFGAIPPPEFMVRVIGYGEFQYNMATSPNLMTFVNRATDVSRWIVHTVLNESRDKKNKMKMLDKFIKTTECLRQLNNFQTLHSVLQGLQHPLLLSRPDLFTPRHREIIADHEMLFSKIDNYKLYREALARSQPACVPWIDIIREDFAQIERDQPSNMNNLINFTKRQNLYEILSKIGHYQFPYNLQIVHQVATFVNKLPKYSEYDLNLLSESLQSQVNSPLAGVYQPSLIGTTGSSSSINLGSARELNNSNRDSNNITGSSSNNNSNSSNSLSPIVKL.

Disordered stretches follow at residues 1-82 (MTDK…SLLN) and 96-154 (NSGG…SSSS). Low complexity-rich tracts occupy residues 23 to 53 (NQPS…TTSP) and 67 to 82 (NNNN…SLLN). Residues 122-132 (RTSTTLAQFSG) show a composition bias toward polar residues. Low complexity predominate over residues 133-154 (SSLPNTENSSPPPSSSLISSSS). Kelch repeat units lie at residues 212 to 261 (GFYL…LYNN), 262 to 311 (SMYI…VESG), 313 to 366 (MIVF…MHKG), 367 to 418 (NMYV…LFQD), and 420 to 469 (IFIS…VKGN). The LisH domain maps to 557-589 (SHQFVLQLIMEYLERNTYHKVIAAIQKESGVLH). In terms of domain architecture, N-terminal Ras-GEF spans 673–804 (NKVQIKAATF…KLRELKKKLQ (132 aa)). One can recognise a Ras-GEF domain in the interval 835–1062 (DELEIARQMT…YDLNLLSESL (228 aa)). The disordered stretch occupies residues 1090–1127 (LGSARELNNSNRDSNNITGSSSNNNSNSSNSLSPIVKL). The span at 1103-1127 (SNNITGSSSNNNSNSSNSLSPIVKL) shows a compositional bias: low complexity.

Its function is as follows. Promotes the exchange of Ras-bound GDP by GTP. In Dictyostelium discoideum (Social amoeba), this protein is Ras guanine nucleotide exchange factor F (gefF).